The sequence spans 107 residues: Iron-binding protein IscA (107 aa).

Residues Cys35, Cys99, and Cys101 each coordinate Fe cation.

It belongs to the HesB/IscA family. Homodimer; may form tetramers and higher multimers. The cofactor is Fe cation.

Its function is as follows. Is able to transfer iron-sulfur clusters to apo-ferredoxin. Multiple cycles of [2Fe2S] cluster formation and transfer are observed, suggesting that IscA acts catalytically. Recruits intracellular free iron so as to provide iron for the assembly of transient iron-sulfur cluster in IscU in the presence of IscS, L-cysteine and the thioredoxin reductase system TrxA/TrxB. This chain is Iron-binding protein IscA, found in Yersinia enterocolitica serotype O:8 / biotype 1B (strain NCTC 13174 / 8081).